Here is a 446-residue protein sequence, read N- to C-terminus: Baeyer-Villiger monooxygenase dmxR6 (446 aa).

The protein belongs to the AflY oxidoreductase family.

Its pathway is secondary metabolite biosynthesis. In terms of biological role, baeyer-Villiger monooxygenase; part of the gene cluster that mediates the biosynthesis of the dimeric xanthones cryptosporioptides. The pathway begins with the synthesis of atrochrysone thioester by the polyketide synthase dmx-nrPKS. The atrochrysone carboxyl ACP thioesterase dmxR1 then breaks the thioester bond and releases the atrochrysone carboxylic acid from dmx-nrPKS. Atrochrysone carboxylic acid is decarboxylated by the decarboxylase dmxR15, and oxidized by the anthrone oxygenase dmxR16 to yield emodin. Emodin is then reduced to emodin hydroquinone by the oxidoreductase dmxR7. A-ring reduction by the short chain dehydrogenase dmxR18, dehydration by the scytalone dehydratase-like protein dmxR17 and probable spontaneous re-oxidation, results in overall deoxygenation to chrysophanol. Baeyer-Villiger oxidation by the Baeyer-Villiger monooxygenase (BVMO) dmxR6 then yields monodictylactone in equilibrium with monodictyphenone. In the case of the cryptosporioptides biosynthesis, monodictylactone is reduced at C-12 to an alcohol (by the short chain dehydrogenases dmxR12 or dmxR8) and hydroxylated at C-5 by dmxR9, yielding the electron-rich aromatic which could eliminate H(2)O to form the ortho-quinonemethide, followed by tautomerisation to paraquinone and complete the formal reduction to produce the 10-methylgroup. Conjugate addition of C-4a-OH to the resulting paraquinone by the monooxygenase dmxR10 then gives cyclohexadienone, which is then reduced at C-5 by the short chain dehydrogenase dmxR3 to give the dihydroxanthone. The 6,7-epoxide in the cryptosporioptides could be introduced by the cytochrome P450 monooxygenase dmxL3. The highly reducing PKS dmxL2 manufactures butyrate, which is further carboxylated by dmxL1 to form ethylmalonate. It is not yet clear whether the carboxylation occurs while the butyrate is attached to the ACP of dmxL2, but this unusual fungal metabolite could then be esterified to O-5 by the O-acetyltransferase dmxR13. Finally, dimerization performed by dmxR5 gives the observed dimers cryptosporioptides A, B and C as the final products of the pathway. The sequence is that of Baeyer-Villiger monooxygenase dmxR6 from Cryptosporiopsis sp. (strain 8999).